Consider the following 169-residue polypeptide: UPF0725 protein At2g19200 (169 aa).

This sequence belongs to the UPF0725 (EMB2204) family.

This Arabidopsis thaliana (Mouse-ear cress) protein is UPF0725 protein At2g19200.